A 199-amino-acid polypeptide reads, in one-letter code: Nuclear protein UL4 (199 aa).

The protein belongs to the alphaherpesvirinae HHV-1 UL4 family.

It is found in the host nucleus. This chain is Nuclear protein UL4, found in Homo sapiens (Human).